Reading from the N-terminus, the 237-residue chain is Cytochrome c oxidase subunit 2 (237 aa).

At 1-30 (MNLVAPTPWGLFFQDSATPQMEGIEELHNN) the chain is on the mitochondrial intermembrane side. Residues 31–51 (IMFYLTIILFSVTWMMITIIK) traverse the membrane as a helical segment. Over 52-67 (SFVNTKSPISHKYMNH) the chain is Mitochondrial matrix. A helical transmembrane segment spans residues 68 to 94 (GTLIELIWTITPAVILILIAFPSFKLL). Over 95-237 (YLMDEVMDPS…SVSLKNFYYD (143 aa)) the chain is Mitochondrial intermembrane. Residues His176, Cys211, Glu213, Cys215, His219, and Met222 each coordinate Cu cation. Glu213 contacts Mg(2+).

Belongs to the cytochrome c oxidase subunit 2 family. Component of the cytochrome c oxidase (complex IV, CIV), a multisubunit enzyme composed of a catalytic core of 3 subunits and several supernumerary subunits. The complex exists as a monomer or a dimer and forms supercomplexes (SCs) in the inner mitochondrial membrane with ubiquinol-cytochrome c oxidoreductase (cytochrome b-c1 complex, complex III, CIII). It depends on Cu cation as a cofactor.

The protein resides in the mitochondrion inner membrane. It catalyses the reaction 4 Fe(II)-[cytochrome c] + O2 + 8 H(+)(in) = 4 Fe(III)-[cytochrome c] + 2 H2O + 4 H(+)(out). Its function is as follows. Component of the cytochrome c oxidase, the last enzyme in the mitochondrial electron transport chain which drives oxidative phosphorylation. The respiratory chain contains 3 multisubunit complexes succinate dehydrogenase (complex II, CII), ubiquinol-cytochrome c oxidoreductase (cytochrome b-c1 complex, complex III, CIII) and cytochrome c oxidase (complex IV, CIV), that cooperate to transfer electrons derived from NADH and succinate to molecular oxygen, creating an electrochemical gradient over the inner membrane that drives transmembrane transport and the ATP synthase. Cytochrome c oxidase is the component of the respiratory chain that catalyzes the reduction of oxygen to water. Electrons originating from reduced cytochrome c in the intermembrane space (IMS) are transferred via the dinuclear copper A center (CU(A)) of subunit 2 and heme A of subunit 1 to the active site in subunit 1, a binuclear center (BNC) formed by heme A3 and copper B (CU(B)). The BNC reduces molecular oxygen to 2 water molecules using 4 electrons from cytochrome c in the IMS and 4 protons from the mitochondrial matrix. This chain is Cytochrome c oxidase subunit 2 (COX2), found in Trichophyton rubrum (Athlete's foot fungus).